Consider the following 40-residue polypeptide: Photosystem II reaction center protein J (40 aa).

A helical transmembrane segment spans residues 10 to 30; the sequence is LWLIGTVAGILVIGLVGIFFY.

This sequence belongs to the PsbJ family. PSII is composed of 1 copy each of membrane proteins PsbA, PsbB, PsbC, PsbD, PsbE, PsbF, PsbH, PsbI, PsbJ, PsbK, PsbL, PsbM, PsbT, PsbX, PsbY, PsbZ, Psb30/Ycf12, at least 3 peripheral proteins of the oxygen-evolving complex and a large number of cofactors. It forms dimeric complexes.

It localises to the plastid. Its subcellular location is the chloroplast thylakoid membrane. One of the components of the core complex of photosystem II (PSII). PSII is a light-driven water:plastoquinone oxidoreductase that uses light energy to abstract electrons from H(2)O, generating O(2) and a proton gradient subsequently used for ATP formation. It consists of a core antenna complex that captures photons, and an electron transfer chain that converts photonic excitation into a charge separation. The polypeptide is Photosystem II reaction center protein J (Marchantia polymorpha (Common liverwort)).